Consider the following 1912-residue polypeptide: Chromodomain-helicase-DNA-binding protein 4 (1912 aa).

Residues 1–157 (MASGLGSPSP…PKSSAQLLED (157 aa)) are disordered. The span at 35–45 (NEEDPEEDLSE) shows a compositional bias: acidic residues. Residue S44 is modified to Phosphoserine. Basic residues predominate over residues 113–131 (GKKKKKKLGPKKEKKSKSK). Residue K133 forms a Glycyl lysine isopeptide (Lys-Gly) (interchain with G-Cter in SUMO2) linkage. Positions 135-145 (EEEEEDDDDDS) are enriched in acidic residues. Glycyl lysine isopeptide (Lys-Gly) (interchain with G-Cter in SUMO2) cross-links involve residues K146, K179, and K297. The tract at residues 243–360 (ATEVAPPPPP…KKKKGEEEVT (118 aa)) is disordered. Positions 295–298 (KIKL) match the KIKL motif. S303 is subject to Phosphoserine. K304 participates in a covalent cross-link: Glycyl lysine isopeptide (Lys-Gly) (interchain with G-Cter in SUMO2). A phosphoserine mark is found at S308, S309, S310, and S319. Over residues 311–323 (EDDDLDVESDFDD) the composition is skewed to acidic residues. Positions 340–353 (SRSRKKLRTTKKKK) are enriched in basic residues. Phosphothreonine is present on T367. The segment at 370–417 (QDYCEVCQQGGEIILCDTCPRAYHMVCLDPDMEKAPEGKWSCPHCEKE) adopts a PHD-type 1 zinc-finger fold. Residue S428 is modified to Phosphoserine. The PHD-type 2 zinc finger occupies 449 to 496 (MEFCRVCKDGGELLCCDTCPSSYHIHCLNPPLPEIPNGEWLCPRCTCP). Positions 494–594 (TCPALKGKVQ…SGDFGGDEEK (101 aa)) constitute a Chromo 1 domain. 2 disordered regions span residues 510–537 (WGQP…PLEG) and 578–603 (NDMD…NKDP). A compositionally biased stretch (pro residues) spans 513-522 (PPSPTPVPRP). Residue S515 is modified to Phosphoserine. 2 positions are modified to phosphothreonine: T517 and T529. The residue at position 531 (S531) is a Phosphoserine. Glycyl lysine isopeptide (Lys-Gly) (interchain with G-Cter in SUMO2) cross-links involve residues K618 and K696. The Chromo 2 domain occupies 622 to 697 (MMIHRILNHS…KLKKVKLRKL (76 aa)). T703 is subject to Phosphothreonine. Residue K711 forms a Glycyl lysine isopeptide (Lys-Gly) (interchain with G-Cter in SUMO1); alternate linkage. K711 participates in a covalent cross-link: Glycyl lysine isopeptide (Lys-Gly) (interchain with G-Cter in SUMO2); alternate. Residues 738 to 922 (RFSWAQGTDT…FHLLNFLTPE (185 aa)) enclose the Helicase ATP-binding domain. ATP is bound at residue 751 to 758 (DEMGLGKT). The DEAH box signature appears at 873–876 (DEAH). The region spanning 1054–1203 (LLQKMLKNLK…LTHLVVRPGL (150 aa)) is the Helicase C-terminal domain. S1209 is modified (phosphoserine). Residues K1212, K1228, K1239, and K1304 each participate in a glycyl lysine isopeptide (Lys-Gly) (interchain with G-Cter in SUMO2) cross-link. A phosphoserine mark is found at S1308, S1349, and S1370. Disordered regions lie at residues 1344-1401 (NYND…KPLP) and 1525-1562 (EENK…PAED). Residues K1528 and K1529 each participate in a glycyl lysine isopeptide (Lys-Gly) (interchain with G-Cter in SUMO2) cross-link. Phosphoserine occurs at positions 1531, 1535, and 1537. Positions 1535 to 1544 (SPSPKTPTPS) are enriched in pro residues. A phosphothreonine mark is found at T1542, T1549, and T1553. K1565 is covalently cross-linked (Glycyl lysine isopeptide (Lys-Gly) (interchain with G-Cter in SUMO2)). S1570 carries the phosphoserine modification. The span at 1570–1584 (SLKEEESIEGEKEVK) shows a compositional bias: basic and acidic residues. Disordered regions lie at residues 1570-1589 (SLKE…TAPE) and 1594-1644 (CTQA…VEKV). Residue K1572 forms a Glycyl lysine isopeptide (Lys-Gly) (interchain with G-Cter in SUMO2) linkage. A Phosphoserine modification is found at S1576. Residues 1577–1912 (IEGEKEVKST…PTPQQVAQQQ (336 aa)) form a required for interaction with PCNT region. Residue K1584 forms a Glycyl lysine isopeptide (Lys-Gly) (interchain with G-Cter in SUMO2) linkage. S1602 carries the post-translational modification Phosphoserine. A compositionally biased stretch (basic and acidic residues) spans 1603–1644 (EDEKVVVEPPEGEEKVEKAEVKERTEEPMETEPKGAADVEKV). Glycyl lysine isopeptide (Lys-Gly) (interchain with G-Cter in SUMO2) cross-links involve residues K1606, K1617, and K1636. K1643 is covalently cross-linked (Glycyl lysine isopeptide (Lys-Gly) (interchain with G-Cter in SUMO2); alternate). K1643 bears the N6-acetyllysine; alternate mark. K1647 is covalently cross-linked (Glycyl lysine isopeptide (Lys-Gly) (interchain with G-Cter in SUMO2)). Position 1653 is a phosphothreonine (T1653). Residues K1660 and K1670 each participate in a glycyl lysine isopeptide (Lys-Gly) (interchain with G-Cter in SUMO2) cross-link. T1679 bears the Phosphothreonine mark. Residues K1687 and K1865 each participate in a glycyl lysine isopeptide (Lys-Gly) (interchain with G-Cter in SUMO2) cross-link.

The protein belongs to the SNF2/RAD54 helicase family. Component of the nucleosome remodeling and deacetylase (NuRD) repressor complex, composed of core proteins MTA1, MTA2, MTA3, RBBP4, RBBP7, HDAC1, HDAC2, MBD2, MBD3, and peripherally associated proteins CDK2AP1, CDK2AP2, GATAD2A, GATAD2B, CHD3, CHD4 and CHD5. The exact stoichiometry of the NuRD complex is unknown, and some subunits such as MBD2 and MBD3, GATAD2A and GATAD2B, and CHD3, CHD4 and CHD5 define mutually exclusive NuRD complexes. Interacts with IKFZ1; the interaction is direct and when in part of the NuRD complex. Part of a complex containing ATR and HDAC2. Interacts with HDAC2; the interaction is direct. Interacts with the cohesin complex component RAD21; the interaction is direct. Interacts with the ISWI chromatin remodeling complex component SMARCA5; the interaction is direct. Interacts with ZGPAT; the interaction is direct. Interacts with ZMYND8; the interaction is direct, appears to occur with monomeric ZMYND8, and is increased following DNA damage. Interacts with BCL6. Interacts with BRD4. Interacts with CBX1. Interacts with CBX3. Interacts with CBX5. Interacts with GATAD2A. Interacts with HDAC1. Interacts with KLF1; the interaction depends on sumoylation of KLF1, and leads to its transcriptional repression. Interacts with MTA1. Interacts with PCNT. Interacts with RBBP7. Interacts with SETX. Interacts with TRIM27. Interacts with histone H3. Interacts with histone H4. Does not interact with PWWP2A. Does not interact with PWWP2B. Interacts (via KIKL motif) with BRD3 (via NET domain). Zn(2+) is required as a cofactor. Widely expressed.

The protein localises to the nucleus. The protein resides in the cytoplasm. It localises to the cytoskeleton. It is found in the microtubule organizing center. Its subcellular location is the centrosome. It carries out the reaction ATP + H2O = ADP + phosphate + H(+). ATP-dependent chromatin-remodeling factor that binds and distorts nucleosomal DNA. Acts as a component of the histone deacetylase NuRD complex which participates in the remodeling of chromatin. Localizes to acetylated damaged chromatin in a ZMYND8-dependent manner, to promote transcriptional repression and double-strand break repair by homologous recombination. Involved in neurogenesis. The sequence is that of Chromodomain-helicase-DNA-binding protein 4 (CHD4) from Homo sapiens (Human).